A 188-amino-acid polypeptide reads, in one-letter code: Protein K (188 aa).

The chain is Protein K (K) from Escherichia coli.